Here is a 31-residue protein sequence, read N- to C-terminus: U14-ctenitoxin-Co1c (31 aa).

Expressed by the venom gland.

The protein resides in the secreted. In terms of biological role, not toxic to mice by intracerebroventricular injection. This is U14-ctenitoxin-Co1c from Ctenus ornatus (Brazilian spider).